Consider the following 211-residue polypeptide: Large ribosomal subunit protein uL3 (211 aa).

Gln150 carries the N5-methylglutamine modification.

It belongs to the universal ribosomal protein uL3 family. As to quaternary structure, part of the 50S ribosomal subunit. Forms a cluster with proteins L14 and L19. Post-translationally, methylated by PrmB.

Its function is as follows. One of the primary rRNA binding proteins, it binds directly near the 3'-end of the 23S rRNA, where it nucleates assembly of the 50S subunit. In Pseudomonas fluorescens (strain ATCC BAA-477 / NRRL B-23932 / Pf-5), this protein is Large ribosomal subunit protein uL3.